We begin with the raw amino-acid sequence, 128 residues long: Riboflavin kinase (128 aa).

Residue 12–17 participates in CDP binding; it reads GKGEGK. Mg(2+) is bound by residues T41 and N43. Residues T97 and E105 each contribute to the FMN site. A CDP-binding site is contributed by 110 to 113; the sequence is IKLR.

The protein belongs to the archaeal riboflavin kinase family. Mg(2+) is required as a cofactor.

It carries out the reaction riboflavin + CTP = CDP + FMN + H(+). The protein operates within cofactor biosynthesis; FMN biosynthesis; FMN from riboflavin (CTP route): step 1/1. In terms of biological role, catalyzes the CTP-dependent phosphorylation of riboflavin (vitamin B2) to form flavin mononucleotide (FMN). The protein is Riboflavin kinase of Methanococcus aeolicus (strain ATCC BAA-1280 / DSM 17508 / OCM 812 / Nankai-3).